The sequence spans 212 residues: NAD(P)H-hydrate epimerase (212 aa).

Positions 10-212 (MRSLERAAIA…IGVIVKPIGL (203 aa)) constitute a YjeF N-terminal domain. (6S)-NADPHX is bound at residue 65 to 69 (NNGGD). K(+) is bound by residues Asn-66 and Asp-129. (6S)-NADPHX contacts are provided by residues 133–139 (GLGLTRP) and Asp-161. Ser-164 contacts K(+).

The protein belongs to the NnrE/AIBP family. The cofactor is K(+).

It carries out the reaction (6R)-NADHX = (6S)-NADHX. It catalyses the reaction (6R)-NADPHX = (6S)-NADPHX. Catalyzes the epimerization of the S- and R-forms of NAD(P)HX, a damaged form of NAD(P)H that is a result of enzymatic or heat-dependent hydration. This is a prerequisite for the S-specific NAD(P)H-hydrate dehydratase to allow the repair of both epimers of NAD(P)HX. The polypeptide is NAD(P)H-hydrate epimerase (Rhodobacter capsulatus (strain ATCC BAA-309 / NBRC 16581 / SB1003)).